Reading from the N-terminus, the 24-residue chain is Conotoxin PIVF (24 aa).

3 disulfide bridges follow: Cys-2–Cys-10, Cys-3–Cys-15, and Cys-13–Cys-19. The residue at position 24 (Lys-24) is a Lysine amide.

The protein belongs to the conotoxin A superfamily. In terms of tissue distribution, expressed by the venom duct.

The protein localises to the secreted. Functionally, probable neurotoxin with ion channel inhibitor activity. In vivo, elicits dose-dependently excitatory activity upon injection into fish. Its action is slowly reversible. The sequence is that of Conotoxin PIVF from Conus purpurascens (Purple cone).